A 642-amino-acid polypeptide reads, in one-letter code: MAADAKKETIRLTTAQALVRFLNQQYIDVDGQVTSFVEGLFAIFGHGNVLGLGEALQEDPGHLKVYQGHNEQGMASTAIAYSRQLYRHKIFAVTASAGPGSANFVTAAGNAYVNSIPILFLPADTFATRQPDPVLQQIEVDYSADTTTNDVLKPVSKYWDRIERPEQLMSALLKAFEVLTNPATAGPVTIALPQDVEGQAYDYPLSFFKKRVHVVKRVQPSSAELAGAVELIQASQTPVLIVGGGAKFSDAGAAIETFSERFNIPIVETPTGKSAISSDFPNNMGGTGILGTAAANAVITKADLIIGAGTRYTDFTTASKTAIHPGKTQLININLNRMQSYKFDAFPIVADVRDTLSQLTESLSDYRSQFTDLATIKEAWQKERQRLAHTNYDAPAYVPEVKNQFDAKTMAAYAEKLQTHLTQTEAVIAVNNTIDPTSIIVAAAGSLPGDVQRIWDPVVPNTYHMEYGYSMMGYEVPAALGIKLAQPDQESYALVGDGSFMMLHSELVTALQYHKKINILVFDNSGFASINNLQMAQGSNSYLTEFRTSDNDIMKTDFAKIAEGYGAKAYRANDRKSLIAAIEDAKKQTVSTLIDIKVLPKTMTQGYGQSWWRVGVSEISNNPKVQKAYQDIQTGIDKAFKY.

Glu71 contacts thiamine diphosphate. The thiamine pyrophosphate binding stretch occupies residues 446 to 526 (SLPGDVQRIW…INILVFDNSG (81 aa)). Mg(2+)-binding residues include Asp497 and Asn524.

The protein belongs to the TPP enzyme family. Requires Mg(2+) as cofactor. Thiamine diphosphate is required as a cofactor.

The enzyme catalyses 3D-3,5/4-trihydroxycyclohexane-1,2-dione + H2O = 5-deoxy-D-glucuronate + H(+). It participates in polyol metabolism; myo-inositol degradation into acetyl-CoA; acetyl-CoA from myo-inositol: step 3/7. Its function is as follows. Involved in the cleavage of the C1-C2 bond of 3D-(3,5/4)-trihydroxycyclohexane-1,2-dione (THcHDO) to yield 5-deoxy-glucuronate (5DG). The protein is 3D-(3,5/4)-trihydroxycyclohexane-1,2-dione hydrolase of Lacticaseibacillus casei (Lactobacillus casei).